Reading from the N-terminus, the 325-residue chain is D-alanine--D-alanine ligase (325 aa).

The 201-residue stretch at Lys109–Glu309 folds into the ATP-grasp domain. Position 136-191 (Cys136–Glu191) interacts with ATP. Mg(2+)-binding residues include Asp262, Glu276, and Asn278.

This sequence belongs to the D-alanine--D-alanine ligase family. Mg(2+) serves as cofactor. The cofactor is Mn(2+).

It is found in the cytoplasm. It catalyses the reaction 2 D-alanine + ATP = D-alanyl-D-alanine + ADP + phosphate + H(+). It functions in the pathway cell wall biogenesis; peptidoglycan biosynthesis. Functionally, cell wall formation. This Solibacter usitatus (strain Ellin6076) protein is D-alanine--D-alanine ligase.